The primary structure comprises 84 residues: M-myrmeciitoxin-Mb2a (84 aa).

A signal peptide spans 1–21 (MKLSCLLLTLAIIFVLTIVHA). Residues 22–48 (PNVKAKALADPESDAVGFADAVGEADP) constitute a propeptide that is removed on maturation.

This sequence belongs to the formicidae venom precursor-01 superfamily. Ant pilosulin family. In terms of tissue distribution, expressed by the venom gland.

The protein localises to the secreted. Shows activity against E.coli and S.aureus (MIC&lt;6.25 uM), moderate activity against P.aeruginosa (MIC&lt;25 uM), weak activity against B.subtilis (MIC&lt;50 uM), and has no effect against L.garvieae, C.albicans, and S.cerevisiae. Has no hemolytic nor cytolytic activity. Causes an IgE-independent histamine release. The chain is M-myrmeciitoxin-Mb2a from Myrmecia banksi (Jack jumper ant).